The chain runs to 261 residues: Protein LIKE COV 2 (261 aa).

The tract at residues 1–38 (MAEGKEATTSSLSQGLTPHQDPDDAPKSPPNSPNSSTR) is disordered. Residues 1 to 56 (MAEGKEATTSSLSQGLTPHQDPDDAPKSPPNSPNSSTRKACYGVLQSWVSKKFMTG) are Cytoplasmic-facing. Polar residues predominate over residues 7–17 (ATTSSLSQGLT). A helical transmembrane segment spans residues 57–77 (FVVLFPVAVTFLITWWFIQFV). Residues 78–91 (DGFFSPIYENLGVD) are Extracellular-facing. A helical transmembrane segment spans residues 92–112 (IFGLGFITSVLFTFFVGIFAS). Residues 113–261 (SWLGSTVFWL…HSLRVPLNRL (149 aa)) lie on the Cytoplasmic side of the membrane.

Belongs to the plant COV1 protein family.

It localises to the membrane. The chain is Protein LIKE COV 2 from Arabidopsis thaliana (Mouse-ear cress).